We begin with the raw amino-acid sequence, 440 residues long: tRNA-2-methylthio-N(6)-dimethylallyladenosine synthase (440 aa).

One can recognise an MTTase N-terminal domain in the interval 3–119 (KKFFIKTFGC…LPELINQAQA (117 aa)). Residues C12, C48, C82, C158, C162, and C165 each contribute to the [4Fe-4S] cluster site. In terms of domain architecture, Radical SAM core spans 144 to 374 (RDNKYCAYVT…LELQKSILSE (231 aa)). The TRAM domain occupies 377 to 437 (KKYEGTVQEV…PFSLEGELLE (61 aa)).

The protein belongs to the methylthiotransferase family. MiaB subfamily. As to quaternary structure, monomer. Requires [4Fe-4S] cluster as cofactor.

The protein resides in the cytoplasm. The enzyme catalyses N(6)-dimethylallyladenosine(37) in tRNA + (sulfur carrier)-SH + AH2 + 2 S-adenosyl-L-methionine = 2-methylsulfanyl-N(6)-dimethylallyladenosine(37) in tRNA + (sulfur carrier)-H + 5'-deoxyadenosine + L-methionine + A + S-adenosyl-L-homocysteine + 2 H(+). Functionally, catalyzes the methylthiolation of N6-(dimethylallyl)adenosine (i(6)A), leading to the formation of 2-methylthio-N6-(dimethylallyl)adenosine (ms(2)i(6)A) at position 37 in tRNAs that read codons beginning with uridine. In Aquifex aeolicus (strain VF5), this protein is tRNA-2-methylthio-N(6)-dimethylallyladenosine synthase.